The following is a 433-amino-acid chain: Serine--tRNA ligase (433 aa).

Residue 235-237 participates in L-serine binding; the sequence is TSE. 266-268 lines the ATP pocket; that stretch reads RSE. Residue glutamate 289 coordinates L-serine. 353–356 lines the ATP pocket; sequence EISS. L-serine is bound at residue serine 388.

The protein belongs to the class-II aminoacyl-tRNA synthetase family. Type-1 seryl-tRNA synthetase subfamily. In terms of assembly, homodimer. The tRNA molecule binds across the dimer.

It localises to the cytoplasm. It catalyses the reaction tRNA(Ser) + L-serine + ATP = L-seryl-tRNA(Ser) + AMP + diphosphate + H(+). It carries out the reaction tRNA(Sec) + L-serine + ATP = L-seryl-tRNA(Sec) + AMP + diphosphate + H(+). It participates in aminoacyl-tRNA biosynthesis; selenocysteinyl-tRNA(Sec) biosynthesis; L-seryl-tRNA(Sec) from L-serine and tRNA(Sec): step 1/1. Its function is as follows. Catalyzes the attachment of serine to tRNA(Ser). Is also able to aminoacylate tRNA(Sec) with serine, to form the misacylated tRNA L-seryl-tRNA(Sec), which will be further converted into selenocysteinyl-tRNA(Sec). The sequence is that of Serine--tRNA ligase from Burkholderia cepacia (Pseudomonas cepacia).